A 263-amino-acid polypeptide reads, in one-letter code: Small ribosomal subunit protein uS15m (263 aa).

The N-terminal 70 residues, 1-70 (MVLKSVFRST…VRQYARPSRK (70 aa)), are a transit peptide targeting the mitochondrion. Positions 238–251 (EREKQKAEEAERKK) are enriched in basic and acidic residues. The segment at 238–263 (EREKQKAEEAERKKSSSSTNPQETAA) is disordered.

It belongs to the universal ribosomal protein uS15 family. In terms of assembly, component of the mitochondrial ribosome small subunit (28S) which comprises a 12S rRNA and about 30 distinct proteins.

It localises to the mitochondrion. This is Small ribosomal subunit protein uS15m (mrps15) from Danio rerio (Zebrafish).